The primary structure comprises 353 residues: Ferrochelatase (353 aa).

The span at 1 to 13 (MTLERTGRDEEKA) shows a compositional bias: basic and acidic residues. The interval 1–23 (MTLERTGRDEEKALTQPPSGHSS) is disordered. Residues His-223 and Glu-304 each coordinate Fe cation.

The protein belongs to the ferrochelatase family.

It is found in the cytoplasm. The catalysed reaction is heme b + 2 H(+) = protoporphyrin IX + Fe(2+). Its pathway is porphyrin-containing compound metabolism; protoheme biosynthesis; protoheme from protoporphyrin-IX: step 1/1. Its function is as follows. Catalyzes the ferrous insertion into protoporphyrin IX. This is Ferrochelatase from Chelativorans sp. (strain BNC1).